The chain runs to 240 residues: Ribosomal RNA large subunit methyltransferase E (240 aa).

A compositionally biased stretch (gly residues) spans 1–20 (MSKAGGNKGGVKTGGRGGAG). Residues 1-27 (MSKAGGNKGGVKTGGRGGAGSSNLQVR) are disordered. S-adenosyl-L-methionine contacts are provided by Gly-92, Trp-94, Asp-115, Asp-131, and Asp-155. Lys-195 acts as the Proton acceptor in catalysis.

The protein belongs to the class I-like SAM-binding methyltransferase superfamily. RNA methyltransferase RlmE family.

It is found in the cytoplasm. It carries out the reaction uridine(2552) in 23S rRNA + S-adenosyl-L-methionine = 2'-O-methyluridine(2552) in 23S rRNA + S-adenosyl-L-homocysteine + H(+). In terms of biological role, specifically methylates the uridine in position 2552 of 23S rRNA at the 2'-O position of the ribose in the fully assembled 50S ribosomal subunit. This chain is Ribosomal RNA large subunit methyltransferase E, found in Brucella anthropi (strain ATCC 49188 / DSM 6882 / CCUG 24695 / JCM 21032 / LMG 3331 / NBRC 15819 / NCTC 12168 / Alc 37) (Ochrobactrum anthropi).